The chain runs to 773 residues: uncharacterized protein (773 aa).

Residues 192-219 (EASGTNNNPKEIEMNSDTTSSVPKSGST) are disordered.

The protein resides in the cytoplasm. This is an uncharacterized protein from Schizosaccharomyces pombe (strain 972 / ATCC 24843) (Fission yeast).